The following is a 438-amino-acid chain: MALLPQEVIRKKRDGGRLDRAEIADFVSGLADGSISEGQVAAFAMATWFSGMNRDECVALTLAMRDSGDILDWSEFGRPIVDKHSTGGVGDNVSLMLAPIVAACGPNVPMISGRGLGHTGGTLDKLESIPGYNIQPSPELFRQIVDEVGCAIIGQTANLAPADKRLYAIRDVTATVDSVPLITASILSKKLAAGLQSLVLDVKLGNGSFMTDARATKTLARSLVDVANGAGVNTLALITDMNEPLADAVGNALEVENCLAYLRGEKSGTRLDQVVMAFAAEMLVAARMAAHPAAGEAMARQALESGDAMERFALMVHRLGGPADFVDRSEAYLEKAPAVVIVPANRDGYLAACETRELGMAVIALGGGRTRPDDRIDHRVGLAGLKPLGTKVERGEPIAFVHAADRQQAEAVRDRIAGFYAIADERPASRPVIVSRIT.

The protein belongs to the thymidine/pyrimidine-nucleoside phosphorylase family. As to quaternary structure, homodimer.

It carries out the reaction thymidine + phosphate = 2-deoxy-alpha-D-ribose 1-phosphate + thymine. It participates in pyrimidine metabolism; dTMP biosynthesis via salvage pathway; dTMP from thymine: step 1/2. Functionally, the enzymes which catalyze the reversible phosphorolysis of pyrimidine nucleosides are involved in the degradation of these compounds and in their utilization as carbon and energy sources, or in the rescue of pyrimidine bases for nucleotide synthesis. The sequence is that of Thymidine phosphorylase from Sinorhizobium fredii (strain NBRC 101917 / NGR234).